The following is a 551-amino-acid chain: Calcium-dependent protein kinase 19 (551 aa).

A lipid anchor (N-myristoyl glycine) is attached at Gly2. The segment at 12-46 (VKKPTPDISGEQNTEVKSREITPKEQPRQRQPAPR) is disordered. The segment covering 25–39 (TEVKSREITPKEQPR) has biased composition (basic and acidic residues). The Protein kinase domain maps to 98-357 (YSLGRELGRG…AAQVLEHPWI (260 aa)). ATP is bound by residues 104 to 112 (LGRGQFGIT) and Lys127. Catalysis depends on Asp222, which acts as the Proton acceptor. Ser263 is subject to Phosphoserine. An autoinhibitory domain region spans residues 363–393 (ASDKPIDSAVLSRMKQLRAMNKLKKLAFKFI). 4 consecutive EF-hand domains span residues 400 to 435 (EELK…LGSR), 436 to 471 (LTET…RFRV), 472 to 507 (ERED…YNMG), and 512 to 542 (IKEI…CSQS). Ca(2+)-binding residues include Asp413, Asp415, Ser417, Thr419, Glu424, Asp449, Asp451, Asn453, Thr455, Glu460, Asp485, Asp487, Ser489, Glu496, Asp520, Asp522, Asp524, Ser526, and Glu531.

This sequence belongs to the protein kinase superfamily. Ser/Thr protein kinase family. CDPK subfamily.

It localises to the membrane. The enzyme catalyses L-seryl-[protein] + ATP = O-phospho-L-seryl-[protein] + ADP + H(+). It carries out the reaction L-threonyl-[protein] + ATP = O-phospho-L-threonyl-[protein] + ADP + H(+). Its activity is regulated as follows. Activated by calcium. Autophosphorylation may play an important role in the regulation of the kinase activity. Its function is as follows. May play a role in signal transduction pathways that involve calcium as a second messenger. In Arabidopsis thaliana (Mouse-ear cress), this protein is Calcium-dependent protein kinase 19 (CPK19).